The sequence spans 251 residues: Large ribosomal subunit protein uL2 (251 aa).

The segment covering 1-12 (MGKRLRVQRHGR) has biased composition (basic residues). Residues 1–22 (MGKRLRVQRHGRGTPQWRNRGH) form a disordered region.

It belongs to the universal ribosomal protein uL2 family. As to quaternary structure, part of the 50S ribosomal subunit. Forms a bridge to the 30S subunit in the 70S ribosome.

One of the primary rRNA binding proteins. Required for association of the 30S and 50S subunits to form the 70S ribosome, for tRNA binding and peptide bond formation. It has been suggested to have peptidyltransferase activity; this is somewhat controversial. Makes several contacts with the 16S rRNA in the 70S ribosome. The polypeptide is Large ribosomal subunit protein uL2 (Ignicoccus hospitalis (strain KIN4/I / DSM 18386 / JCM 14125)).